The primary structure comprises 205 residues: uncharacterized protein (205 aa).

3 helical membrane passes run 45–65 (LFFYFFANFFTNSFIVQFLVI), 119–139 (VFWLGLVVGPAAWIFFVVTAF), and 144–164 (FEWMIVALLGALMNMANLWGY).

It belongs to the TVP23 family.

It localises to the membrane. This is an uncharacterized protein from Caenorhabditis elegans.